A 245-amino-acid chain; its full sequence is DNA polymerase sliding clamp 2 (245 aa).

Belongs to the PCNA family. As to quaternary structure, homotrimer. The subunits circularize to form a toroid; DNA passes through its center. Replication factor C (RFC) is required to load the toroid on the DNA.

Sliding clamp subunit that acts as a moving platform for DNA processing. Responsible for tethering the catalytic subunit of DNA polymerase and other proteins to DNA during high-speed replication. The chain is DNA polymerase sliding clamp 2 from Sulfolobus acidocaldarius (strain ATCC 33909 / DSM 639 / JCM 8929 / NBRC 15157 / NCIMB 11770).